A 488-amino-acid chain; its full sequence is UDP-N-acetylmuramate--L-alanine ligase (488 aa).

Gly-122–Thr-128 provides a ligand contact to ATP.

The protein belongs to the MurCDEF family.

It localises to the cytoplasm. It catalyses the reaction UDP-N-acetyl-alpha-D-muramate + L-alanine + ATP = UDP-N-acetyl-alpha-D-muramoyl-L-alanine + ADP + phosphate + H(+). The protein operates within cell wall biogenesis; peptidoglycan biosynthesis. Its function is as follows. Cell wall formation. The protein is UDP-N-acetylmuramate--L-alanine ligase of Mycobacterium marinum (strain ATCC BAA-535 / M).